The following is a 4462-amino-acid chain: Dynein axonemal heavy chain 17 (4462 aa).

Residues 1–1808 (MTMAPDVRLE…FANICDAQIQ (1808 aa)) are stem. 2 TPR repeats span residues 1019–1052 (TWTD…VSKC) and 1702–1736 (IWWT…QLNV). 4 AAA regions span residues 1809–2030 (YSYE…VLVV), 2090–2311 (KIIK…FGFK), 2417–2665 (ELDP…IFQG), and 2763–3012 (SYNE…ERRY). Residues 1847 to 1854 (GPAGTGKT), 2128 to 2135 (GNAGSGKS), 2455 to 2462 (GNAGTGKS), and 2801 to 2808 (GVGGSGKQ) each bind ATP. Coiled-coil stretches lie at residues 3027–3086 (YQNL…LIQV) and 3257–3309 (DVAP…EKIK). The stalk stretch occupies residues 3027–3313 (YQNLLAKKRT…TAEKIKCQQE (287 aa)). 2 AAA regions span residues 3405–3632 (LTDD…EIEE) and 3842–4068 (IKNF…VLYN). One copy of the TPR 3 repeat lies at 4147-4182 (PESPYLYGLHPNAEIGFLTVTSEKLFRTVLEMQPKE).

Belongs to the dynein heavy chain family. In terms of assembly, consists of at least two heavy chains and a number of intermediate and light chains. Expressed in testis. Expressed in spermatozoa (at protein level). Not detected in airway epithelial cells (at protein level).

The protein resides in the cytoplasm. The protein localises to the cytoskeleton. It is found in the flagellum axoneme. Force generating protein component of the outer dynein arms (ODAs) in the sperm flagellum. Produces force towards the minus ends of microtubules. Dynein has ATPase activity; the force-producing power stroke is thought to occur on release of ADP. Plays a major role in sperm motility, implicated in sperm flagellar assembly and beating. This chain is Dynein axonemal heavy chain 17, found in Homo sapiens (Human).